Consider the following 295-residue polypeptide: UDP-N-acetylenolpyruvoylglucosamine reductase (295 aa).

Positions 25–189 (RVGGPADLFA…LEALFRLDQR (165 aa)) constitute an FAD-binding PCMH-type domain. R169 is an active-site residue. Residue S218 is the Proton donor of the active site. E288 is a catalytic residue.

It belongs to the MurB family. FAD is required as a cofactor.

It localises to the cytoplasm. The enzyme catalyses UDP-N-acetyl-alpha-D-muramate + NADP(+) = UDP-N-acetyl-3-O-(1-carboxyvinyl)-alpha-D-glucosamine + NADPH + H(+). Its pathway is cell wall biogenesis; peptidoglycan biosynthesis. Cell wall formation. The polypeptide is UDP-N-acetylenolpyruvoylglucosamine reductase (Pelobacter propionicus (strain DSM 2379 / NBRC 103807 / OttBd1)).